Consider the following 71-residue polypeptide: MKKDLHPQYYSVAVKCETCKNEFTLKSTKKEFKIDVCSKCHPVYTGNRSQAKSTGMIEKFNRRLAKKDQQK.

The protein belongs to the bacterial ribosomal protein bL31 family. Type A subfamily. Part of the 50S ribosomal subunit.

In terms of biological role, binds the 23S rRNA. In Mycoplasmopsis synoviae (strain 53) (Mycoplasma synoviae), this protein is Large ribosomal subunit protein bL31 (rpmE).